The following is a 118-amino-acid chain: UPF0295 protein BcerKBAB4_0454 (118 aa).

The next 2 helical transmembrane spans lie at 12-32 and 43-63; these read IRTFALSLVFIGLFIAYLGVF and FMMVGFLAVIASTVVYFWIGM.

Belongs to the UPF0295 family.

It localises to the cell membrane. In Bacillus mycoides (strain KBAB4) (Bacillus weihenstephanensis), this protein is UPF0295 protein BcerKBAB4_0454.